The primary structure comprises 362 residues: 3-dehydroquinate synthase (362 aa).

NAD(+)-binding positions include 95–99 (GVVGD), 119–120 (TT), Lys-132, and Lys-141. The Zn(2+) site is built by Glu-174, His-238, and His-255.

It belongs to the sugar phosphate cyclases superfamily. Dehydroquinate synthase family. Co(2+) serves as cofactor. The cofactor is Zn(2+). Requires NAD(+) as cofactor.

It localises to the cytoplasm. The catalysed reaction is 7-phospho-2-dehydro-3-deoxy-D-arabino-heptonate = 3-dehydroquinate + phosphate. Its pathway is metabolic intermediate biosynthesis; chorismate biosynthesis; chorismate from D-erythrose 4-phosphate and phosphoenolpyruvate: step 2/7. Functionally, catalyzes the conversion of 3-deoxy-D-arabino-heptulosonate 7-phosphate (DAHP) to dehydroquinate (DHQ). The sequence is that of 3-dehydroquinate synthase from Chlorobium luteolum (strain DSM 273 / BCRC 81028 / 2530) (Pelodictyon luteolum).